A 121-amino-acid polypeptide reads, in one-letter code: MVKRTGPTDINLRRLIRTLRKKSNEEGVKIWKDIAWRLERPRRQRAEVNISKINRYTKEGDVVIVPGSVLGAGRLEHKVVVAAWKFSEAARRKIIEAGGEAISIEELMERNPKGSGVIIME.

The protein belongs to the eukaryotic ribosomal protein eL18 family. In terms of assembly, part of the 50S ribosomal subunit.

In Thermococcus kodakarensis (strain ATCC BAA-918 / JCM 12380 / KOD1) (Pyrococcus kodakaraensis (strain KOD1)), this protein is Large ribosomal subunit protein eL18.